The sequence spans 580 residues: Amino-acid acetyltransferase, mitochondrial (580 aa).

Positions 403–560 (LTMQNLFDDK…NPRHKNGVVN (158 aa)) constitute an N-acetyltransferase domain.

It belongs to the acetyltransferase family.

It is found in the mitochondrion. It catalyses the reaction L-glutamate + acetyl-CoA = N-acetyl-L-glutamate + CoA + H(+). It participates in amino-acid biosynthesis; L-arginine biosynthesis; N(2)-acetyl-L-ornithine from L-glutamate: step 1/4. In terms of biological role, N-acetylglutamate synthase involved in arginine biosynthesis. This is Amino-acid acetyltransferase, mitochondrial (ARG2) from Candida dubliniensis (strain CD36 / ATCC MYA-646 / CBS 7987 / NCPF 3949 / NRRL Y-17841) (Yeast).